The sequence spans 238 residues: Ribonuclease PH (238 aa).

Phosphate-binding positions include arginine 86 and 124 to 126; that span reads GTR.

It belongs to the RNase PH family. In terms of assembly, homohexameric ring arranged as a trimer of dimers.

The catalysed reaction is tRNA(n+1) + phosphate = tRNA(n) + a ribonucleoside 5'-diphosphate. Functionally, phosphorolytic 3'-5' exoribonuclease that plays an important role in tRNA 3'-end maturation. Removes nucleotide residues following the 3'-CCA terminus of tRNAs; can also add nucleotides to the ends of RNA molecules by using nucleoside diphosphates as substrates, but this may not be physiologically important. Probably plays a role in initiation of 16S rRNA degradation (leading to ribosome degradation) during starvation. This chain is Ribonuclease PH, found in Salmonella agona (strain SL483).